A 133-amino-acid chain; its full sequence is Small ribosomal subunit protein uS9 (133 aa).

A disordered region spans residues 97–133 (MKQELKSQGFLTRDPRKKERKKYGRKKARKSFQFSKR). Residues 114-133 (KERKKYGRKKARKSFQFSKR) show a composition bias toward basic residues.

It belongs to the universal ribosomal protein uS9 family.

The protein is Small ribosomal subunit protein uS9 (rpsI) of Chlamydia muridarum (strain MoPn / Nigg).